Consider the following 422-residue polypeptide: GTPase Obg (422 aa).

The Obg domain occupies 1 to 156; the sequence is MKFIDEVNVL…FALRLVLKVL (156 aa). The OBG-type G domain occupies 157-324; it reads ADVGLVGKPS…LKAAIFKMLE (168 aa). Residues 163-170, 188-192, 209-212, 278-281, and 305-307 contribute to the GTP site; these read GKPSAGKS, FTTLV, DLPG, NKSD, and SAL. Residues S170 and T190 each coordinate Mg(2+). In terms of domain architecture, OCT spans 342–420; that stretch reads NITLDRDALK…IGNFEFDWSD (79 aa).

It belongs to the TRAFAC class OBG-HflX-like GTPase superfamily. OBG GTPase family. Monomer. Requires Mg(2+) as cofactor.

Its subcellular location is the cytoplasm. In terms of biological role, an essential GTPase which binds GTP, GDP and possibly (p)ppGpp with moderate affinity, with high nucleotide exchange rates and a fairly low GTP hydrolysis rate. Plays a role in control of the cell cycle, stress response, ribosome biogenesis and in those bacteria that undergo differentiation, in morphogenesis control. In Metamycoplasma arthritidis (strain 158L3-1) (Mycoplasma arthritidis), this protein is GTPase Obg.